A 385-amino-acid polypeptide reads, in one-letter code: UPF0284 protein P9301_04631 (385 aa).

This sequence belongs to the UPF0284 family.

In Prochlorococcus marinus (strain MIT 9301), this protein is UPF0284 protein P9301_04631.